The chain runs to 168 residues: Photosystem I assembly protein Ycf3 (168 aa).

TPR repeat units follow at residues 35–68, 72–105, and 120–153; these read AFTYYRDGMSAQSEGNYAEALQNYYEATRPEIDP, SYILYNIGLIHTSNGEHTKALEYYFRALERNPFL, and GEQAILQGDSEIAEAWFDQAAEYWKQAIALTPGN.

This sequence belongs to the Ycf3 family.

The protein resides in the plastid. The protein localises to the chloroplast thylakoid membrane. In terms of biological role, essential for the assembly of the photosystem I (PSI) complex. May act as a chaperone-like factor to guide the assembly of the PSI subunits. The sequence is that of Photosystem I assembly protein Ycf3 from Phalaenopsis aphrodite subsp. formosana (Moth orchid).